Here is a 124-residue protein sequence, read N- to C-terminus: Predicted GPI-anchored protein 11 (124 aa).

Residues 1-18 (MKFQFVTALALASTMAVA) form the signal peptide. Residues 38-59 (REGGSTGAELQDNNQPTAGLFG) form a disordered region. S107 carries GPI-anchor amidated serine lipidation. The propeptide at 108-124 (GAAGGVGNLFSGILGGL) is removed in mature form.

It is found in the cell membrane. This is Predicted GPI-anchored protein 11 (PGA11) from Candida albicans (strain SC5314 / ATCC MYA-2876) (Yeast).